Here is a 204-residue protein sequence, read N- to C-terminus: Wound-induced proteinase inhibitor 2 (204 aa).

Residues 1–25 form the signal peptide; the sequence is MAVPKEVSFLASLLVLGILLLHVDA. Repeat copies occupy residues 25–67, 68–125, and 126–183. 6 cysteine pairs are disulfide-bonded: Cys-28–Cys-100, Cys-38–Cys-75, Cys-41–Cys-59, Cys-42–Cys-71, Cys-48–Cys-84, and Cys-99–Cys-117. A 4; truncated repeat occupies 184-204; it reads PKACPKNCDPNIAYSLCLYEK.

Belongs to the protease inhibitor I20 (potato type II proteinase inhibitor) family.

In Capsicum annuum (Capsicum pepper), this protein is Wound-induced proteinase inhibitor 2 (PIN2).